A 128-amino-acid chain; its full sequence is Large ribosomal subunit protein bL17 (128 aa).

Belongs to the bacterial ribosomal protein bL17 family. As to quaternary structure, part of the 50S ribosomal subunit. Contacts protein L32.

This chain is Large ribosomal subunit protein bL17, found in Klebsiella pneumoniae (strain 342).